The chain runs to 423 residues: Adenylosuccinate synthetase (423 aa).

GTP is bound by residues 12–18 (GDEGKGK) and 40–42 (GHT). Catalysis depends on Asp-13, which acts as the Proton acceptor. Residues Asp-13 and Gly-40 each coordinate Mg(2+). IMP-binding positions include 13 to 16 (DEGK), 38 to 41 (NAGH), Thr-128, Arg-142, Gln-223, Thr-238, and Arg-302. His-41 acts as the Proton donor in catalysis. 298–304 (TTTGRPR) is a substrate binding site. Residues Arg-304, 330-332 (RLD), and 412-414 (CIG) contribute to the GTP site.

Belongs to the adenylosuccinate synthetase family. In terms of assembly, homodimer. It depends on Mg(2+) as a cofactor.

It localises to the cytoplasm. It catalyses the reaction IMP + L-aspartate + GTP = N(6)-(1,2-dicarboxyethyl)-AMP + GDP + phosphate + 2 H(+). It functions in the pathway purine metabolism; AMP biosynthesis via de novo pathway; AMP from IMP: step 1/2. Plays an important role in the de novo pathway of purine nucleotide biosynthesis. Catalyzes the first committed step in the biosynthesis of AMP from IMP. This chain is Adenylosuccinate synthetase, found in Dehalococcoides mccartyi (strain ATCC BAA-2266 / KCTC 15142 / 195) (Dehalococcoides ethenogenes (strain 195)).